Here is a 208-residue protein sequence, read N- to C-terminus: Pyridoxine/pyridoxamine 5'-phosphate oxidase (208 aa).

Residues 53–58 (RTVLLK), 68–69 (YS), Lys75, and Gln100 each bind FMN. Residue Lys58 participates in substrate binding. Substrate-binding residues include Tyr118, Arg122, and Ser126. Residues 135–136 (QS) and Trp180 each bind FMN. 186–188 (RLH) is a binding site for substrate. Arg190 is a binding site for FMN.

It belongs to the pyridoxamine 5'-phosphate oxidase family. As to quaternary structure, homodimer. It depends on FMN as a cofactor.

It carries out the reaction pyridoxamine 5'-phosphate + O2 + H2O = pyridoxal 5'-phosphate + H2O2 + NH4(+). The enzyme catalyses pyridoxine 5'-phosphate + O2 = pyridoxal 5'-phosphate + H2O2. It participates in cofactor metabolism; pyridoxal 5'-phosphate salvage; pyridoxal 5'-phosphate from pyridoxamine 5'-phosphate: step 1/1. Its pathway is cofactor metabolism; pyridoxal 5'-phosphate salvage; pyridoxal 5'-phosphate from pyridoxine 5'-phosphate: step 1/1. Functionally, catalyzes the oxidation of either pyridoxine 5'-phosphate (PNP) or pyridoxamine 5'-phosphate (PMP) into pyridoxal 5'-phosphate (PLP). This chain is Pyridoxine/pyridoxamine 5'-phosphate oxidase, found in Xylella fastidiosa (strain 9a5c).